A 74-amino-acid chain; its full sequence is UPF0435 protein BAA_0470 (74 aa).

This sequence belongs to the UPF0435 family.

The sequence is that of UPF0435 protein BAA_0470 from Bacillus anthracis (strain A0248).